The sequence spans 61 residues: Putative antitoxin APE_0472b.1 (61 aa).

This sequence belongs to the UPF0165 family.

Possibly the antitoxin component of a type II toxin-antitoxin (TA) system. The sequence is that of Putative antitoxin APE_0472b.1 from Aeropyrum pernix (strain ATCC 700893 / DSM 11879 / JCM 9820 / NBRC 100138 / K1).